The following is a 463-amino-acid chain: Homoserine O-acetyltransferase FUB5 (463 aa).

The 324-residue stretch at 113-436 (NVMIICHALS…VSDDGHDAFL (324 aa)) folds into the AB hydrolase-1 domain. Catalysis depends on S211, which acts as the Nucleophile. Basic and acidic residues predominate over residues 296-312 (RFGRDTGSKKKTQKQES). The segment at 296–331 (RFGRDTGSKKKTQKQESKTLPSNSTPIHSHSGADET) is disordered. Catalysis depends on residues D403 and H432.

It belongs to the AB hydrolase superfamily. MetX family.

The catalysed reaction is L-homoserine + acetyl-CoA = O-acetyl-L-homoserine + CoA. It participates in mycotoxin biosynthesis. In terms of biological role, homoserine O-acetyltransferase; part of the gene cluster that mediates the biosynthesis of fusaric acid, a mycotoxin with low to moderate toxicity to animals and humans, but with high phytotoxic properties. L-aspartate is suggested as fusaric acid amino acid precursor that is activated and further processed to O-acetyl-L-homoserine by cluster enzymes aspartate kinase FUB3 and homoserine O-acetyltransferase FUB5, as well as enzymes of the primary metabolism. The polyketide synthase (PKS) FUB1 generates the triketide trans-2-hexenal which is presumptively released by the hydrolase FUB4 and linked to the NRPS-bound amino acid precursor by NAD(P)-dependent dehydrogenase FUB6. FUB1, FUB4, and the non-canonical NRPS Fub8 may form an enzyme complex. Further processing of the NRPS-bound intermediate might be carried out by FUB6 and the sulfhydrylase FUB7, enabling a spontaneous electrocyclization to close the carbon backbone of fusaric acid. Dihydrofusaric acid is likely to be released via reduction by the thioester reductase (TR) domain of FUB8 whereupon the final oxidation to fusaric acid may (also) be performed by the FMN-dependent dehydrogenase FUB9. This chain is Homoserine O-acetyltransferase FUB5, found in Gibberella moniliformis (strain M3125 / FGSC 7600) (Maize ear and stalk rot fungus).